The following is a 1128-amino-acid chain: Translation initiation factor IF-2 (1128 aa).

The interval 57-519 (NSDKQILSIN…KETTRQRQKR (463 aa)) is disordered. A compositionally biased stretch (basic and acidic residues) spans 70 to 83 (NKKDNYKQNKEDKS). The segment covering 100–110 (KKQLLNKPLNK) has biased composition (low complexity). Positions 120–146 (QLKNPNKPNIYNSSQSQANLTNQNTKS) are enriched in polar residues. The span at 147–158 (KPSEHFNKDKKT) shows a compositional bias: basic and acidic residues. Low complexity predominate over residues 182 to 196 (KNINNNLKSNESSKN). Residues 201–214 (GDKRELSLKPDQNR) are compositionally biased toward basic and acidic residues. Composition is skewed to polar residues over residues 243-267 (KQNN…NRPG) and 386-397 (AKTNNQKQNIES). Positions 432–445 (RKDWDDSAKLEALR) are enriched in basic and acidic residues. Over residues 499–519 (HKSTKQFKKKKKETTRQRQKR) the composition is skewed to basic residues. A tr-type G domain is found at 620–792 (KRPPVITVMG…ILLVSEVEDL (173 aa)). Residues 629 to 636 (GHVDHGKT) form a G1 region. GTP is bound at residue 629 to 636 (GHVDHGKT). The interval 654–658 (GITQH) is G2. A G3 region spans residues 679–682 (DTPG). Residues 679-683 (DTPGH) and 733-736 (NKID) each bind GTP. A G4 region spans residues 733 to 736 (NKID). The tract at residues 769–771 (SAI) is G5.

Belongs to the TRAFAC class translation factor GTPase superfamily. Classic translation factor GTPase family. IF-2 subfamily.

It is found in the cytoplasm. One of the essential components for the initiation of protein synthesis. Protects formylmethionyl-tRNA from spontaneous hydrolysis and promotes its binding to the 30S ribosomal subunits. Also involved in the hydrolysis of GTP during the formation of the 70S ribosomal complex. This chain is Translation initiation factor IF-2, found in Prochlorococcus marinus (strain MIT 9312).